We begin with the raw amino-acid sequence, 169 residues long: Ribosome maturation factor RimM (169 aa).

Residues 97–169 (PGEYYWYQLI…VITVDWDMNF (73 aa)) enclose the PRC barrel domain.

This sequence belongs to the RimM family. Binds ribosomal protein uS19.

The protein resides in the cytoplasm. Functionally, an accessory protein needed during the final step in the assembly of 30S ribosomal subunit, possibly for assembly of the head region. Essential for efficient processing of 16S rRNA. May be needed both before and after RbfA during the maturation of 16S rRNA. It has affinity for free ribosomal 30S subunits but not for 70S ribosomes. The polypeptide is Ribosome maturation factor RimM (Legionella pneumophila subsp. pneumophila (strain Philadelphia 1 / ATCC 33152 / DSM 7513)).